We begin with the raw amino-acid sequence, 456 residues long: Ribosomal RNA small subunit methyltransferase F (456 aa).

Residues 109-115, Glu133, Arg138, and Asp177 contribute to the S-adenosyl-L-methionine site; that span reads AAAPGGK. Cys230 functions as the Nucleophile in the catalytic mechanism.

It belongs to the class I-like SAM-binding methyltransferase superfamily. RsmB/NOP family.

Its subcellular location is the cytoplasm. It catalyses the reaction cytidine(1400) in 16S rRNA + S-adenosyl-L-methionine = 5-methylcytidine(1400) in 16S rRNA + S-adenosyl-L-homocysteine + H(+). The enzyme catalyses cytidine(1404) in 16S rRNA + S-adenosyl-L-methionine = 5-methylcytidine(1404) in 16S rRNA + S-adenosyl-L-homocysteine + H(+). It carries out the reaction cytidine(1407) in 16S rRNA + S-adenosyl-L-methionine = 5-methylcytidine(1407) in 16S rRNA + S-adenosyl-L-homocysteine + H(+). Specifically methylates the cytosines at positions 1400 (m5C1400), 1404 (m5C1404) and 1407 (m5C1407) of 16S rRNA. C1400, C1404 and C1407 are methylated in a 30S subunit substrate, but only C1400 and C1404 are methylated when naked 16S rRNA is the substrate. Methylation by RsmF may facilitate growth at temperatures outside the optimal growth temperature. This Thermus thermophilus (strain ATCC 27634 / DSM 579 / HB8) protein is Ribosomal RNA small subunit methyltransferase F.